A 249-amino-acid polypeptide reads, in one-letter code: Type-1Aa cytolytic delta-endotoxin (249 aa).

This sequence belongs to the cyt1/cyt2 endotoxin family. Active after proteolytic processing.

Its function is as follows. Kills the larvae of dipteran insects by making pores in the epithelial cell membrane of the insect midgut. Acts on mosquitos and black flies. In Bacillus thuringiensis subsp. morrisoni, this protein is Type-1Aa cytolytic delta-endotoxin (cyt1Aa).